A 160-amino-acid polypeptide reads, in one-letter code: uncharacterized protein (160 aa).

The protein localises to the cytoplasm. It is found in the nucleus. This is an uncharacterized protein from Schizosaccharomyces pombe (strain 972 / ATCC 24843) (Fission yeast).